Reading from the N-terminus, the 97-residue chain is Large ribosomal subunit protein uL23 (97 aa).

The protein belongs to the universal ribosomal protein uL23 family. In terms of assembly, part of the 50S ribosomal subunit. Contacts protein L29, and trigger factor when it is bound to the ribosome.

Functionally, one of the early assembly proteins it binds 23S rRNA. One of the proteins that surrounds the polypeptide exit tunnel on the outside of the ribosome. Forms the main docking site for trigger factor binding to the ribosome. The protein is Large ribosomal subunit protein uL23 of Brucella suis (strain ATCC 23445 / NCTC 10510).